The following is a 138-amino-acid chain: Acidic phospholipase A2 ammodytin I1 (138 aa).

Residues 1-16 (MRILWIVAVCLIGAEG) form the signal peptide. Intrachain disulfides connect Cys42-Cys131, Cys44-Cys60, Cys59-Cys111, Cys65-Cys138, Cys66-Cys104, Cys73-Cys97, and Cys91-Cys102. Ca(2+) contacts are provided by Tyr43, Gly45, and Gly47. Residue His63 is part of the active site. Asp64 is a Ca(2+) binding site. Asp105 is an active-site residue.

Belongs to the phospholipase A2 family. Group II subfamily. D49 sub-subfamily. It depends on Ca(2+) as a cofactor. In terms of tissue distribution, expressed by the venom gland.

The protein localises to the secreted. It catalyses the reaction a 1,2-diacyl-sn-glycero-3-phosphocholine + H2O = a 1-acyl-sn-glycero-3-phosphocholine + a fatty acid + H(+). Its function is as follows. Snake venom phospholipase A2 (PLA2) that has enzymatic activity but is non-toxic. PLA2 catalyzes the calcium-dependent hydrolysis of the 2-acyl groups in 3-sn-phosphoglycerides. In Vipera ammodytes ammodytes (Western sand viper), this protein is Acidic phospholipase A2 ammodytin I1.